Consider the following 948-residue polypeptide: Phosphoenolpyruvate carboxylase (948 aa).

Active-site residues include histidine 138 and lysine 610.

It belongs to the PEPCase type 1 family. Mg(2+) serves as cofactor.

It catalyses the reaction oxaloacetate + phosphate = phosphoenolpyruvate + hydrogencarbonate. In terms of biological role, forms oxaloacetate, a four-carbon dicarboxylic acid source for the tricarboxylic acid cycle. This is Phosphoenolpyruvate carboxylase from Streptococcus sanguinis (strain SK36).